The sequence spans 116 residues: Large ribosomal subunit protein bL17 (116 aa).

This sequence belongs to the bacterial ribosomal protein bL17 family. Part of the 50S ribosomal subunit. Contacts protein L32.

This is Large ribosomal subunit protein bL17 from Gloeobacter violaceus (strain ATCC 29082 / PCC 7421).